A 167-amino-acid chain; its full sequence is Leptin (167 aa).

Residues 1–21 (MYWRTLWGFLWLWPYLFYIQA) form the signal peptide. An intrachain disulfide couples Cys-117 to Cys-167.

It belongs to the leptin family.

Its subcellular location is the secreted. In terms of biological role, key player in the regulation of energy balance and body weight control. Once released into the circulation, has central and peripheral effects by binding LEPR, found in many tissues, which results in the activation of several major signaling pathways. In the hypothalamus, acts as an appetite-regulating factor that induces a decrease in food intake and an increase in energy consumption by inducing anorexinogenic factors and suppressing orexigenic neuropeptides, also regulates bone mass and secretion of hypothalamo-pituitary-adrenal hormones. In the periphery, increases basal metabolism, influences reproductive function, regulates pancreatic beta-cell function and insulin secretion, is pro-angiogenic for endothelial cell and affects innate and adaptive immunity. In the arcuate nucleus of the hypothalamus, activates by depolarization POMC neurons inducing FOS and SOCS3 expression to release anorexigenic peptides and inhibits by hyperpolarization NPY neurons inducing SOCS3 with a consequent reduction on release of orexigenic peptides. In addition to its known satiety inducing effect, has a modulatory role in nutrient absorption. In the intestine, reduces glucose absorption by enterocytes by activating PKC and leading to a sequential activation of p38, PI3K and ERK signaling pathways which exerts an inhibitory effect on glucose absorption. Acts as a growth factor on certain tissues, through the activation of different signaling pathways increases expression of genes involved in cell cycle regulation such as CCND1, via JAK2-STAT3 pathway, or VEGFA, via MAPK1/3 and PI3K-AKT1 pathways. May also play an apoptotic role via JAK2-STAT3 pathway and up-regulation of BIRC5 expression. Pro-angiogenic, has mitogenic activity on vascular endothelial cells and plays a role in matrix remodeling by regulating the expression of matrix metalloproteinases (MMPs) and tissue inhibitors of metalloproteinases (TIMPs). In innate immunity, modulates the activity and function of neutrophils by increasing chemotaxis and the secretion of oxygen radicals. Increases phagocytosis by macrophages and enhances secretion of pro-inflammatory mediators. Increases cytotoxic ability of NK cells. Plays a pro-inflammatory role, in synergy with IL1B, by inducing NOS2 which promotes the production of IL6, IL8 and Prostaglandin E2, through a signaling pathway that involves JAK2, PI3K, MAP2K1/MEK1 and MAPK14/p38. In adaptive immunity, promotes the switch of memory T-cells towards T helper-1 cell immune responses. Increases CD4(+)CD25(-) T-cell proliferation and reduces autophagy during TCR (T-cell receptor) stimulation, through MTOR signaling pathway activation and BCL2 up-regulation. The polypeptide is Leptin (LEP) (Macaca mulatta (Rhesus macaque)).